The sequence spans 479 residues: GTPase Der (479 aa).

EngA-type G domains lie at 3–167 (FTLA…EAAA) and 191–366 (LQIA…ATWN). GTP-binding positions include 9–16 (GRPNVGKS), 56–60 (DTAGL), 119–122 (NKAE), 197–204 (GRPNAGKS), 244–248 (DTAGM), and 309–312 (NKWD). The KH-like domain occupies 367–453 (TRISTARLNQ…RLWMRSQADD (87 aa)). The segment at 449–479 (SQADDNPYKNRKKSTPSRLNKHVRKGETKKG) is disordered. The segment covering 457–472 (KNRKKSTPSRLNKHVR) has biased composition (basic residues).

It belongs to the TRAFAC class TrmE-Era-EngA-EngB-Septin-like GTPase superfamily. EngA (Der) GTPase family. In terms of assembly, associates with the 50S ribosomal subunit.

Its function is as follows. GTPase that plays an essential role in the late steps of ribosome biogenesis. The protein is GTPase Der of Jannaschia sp. (strain CCS1).